Reading from the N-terminus, the 337-residue chain is Nicotinate-nucleotide--dimethylbenzimidazole phosphoribosyltransferase (337 aa).

E305 (proton acceptor) is an active-site residue.

Belongs to the CobT family.

The enzyme catalyses 5,6-dimethylbenzimidazole + nicotinate beta-D-ribonucleotide = alpha-ribazole 5'-phosphate + nicotinate + H(+). Its pathway is nucleoside biosynthesis; alpha-ribazole biosynthesis; alpha-ribazole from 5,6-dimethylbenzimidazole: step 1/2. Catalyzes the synthesis of alpha-ribazole-5'-phosphate from nicotinate mononucleotide (NAMN) and 5,6-dimethylbenzimidazole (DMB). This Roseobacter denitrificans (strain ATCC 33942 / OCh 114) (Erythrobacter sp. (strain OCh 114)) protein is Nicotinate-nucleotide--dimethylbenzimidazole phosphoribosyltransferase.